Here is a 367-residue protein sequence, read N- to C-terminus: Undecaprenyl-phosphate alpha-N-acetylglucosaminyl 1-phosphate transferase (367 aa).

10 consecutive transmembrane segments (helical) span residues 3–23 (LLTV…FLFF), 46–66 (LIPL…FGIV), 69–89 (YIPH…IGAL), 132–152 (VLGP…INAF), 158–178 (IDGL…MILW), 187–207 (IWCF…LGIL), 213–233 (VFMG…ILLE), 242–262 (ISPV…VAIM), 294–314 (AFVL…LAEY), and 318–338 (VPEW…GYCI).

It belongs to the glycosyltransferase 4 family. WecA subfamily. Mg(2+) is required as a cofactor. Mn(2+) serves as cofactor.

It localises to the cell inner membrane. It catalyses the reaction di-trans,octa-cis-undecaprenyl phosphate + UDP-N-acetyl-alpha-D-glucosamine = N-acetyl-alpha-D-glucosaminyl-di-trans,octa-cis-undecaprenyl diphosphate + UMP. It participates in bacterial outer membrane biogenesis; LPS O-antigen biosynthesis. Its pathway is bacterial outer membrane biogenesis; enterobacterial common antigen biosynthesis. Functionally, catalyzes the transfer of the GlcNAc-1-phosphate moiety from UDP-GlcNAc onto the carrier lipid undecaprenyl phosphate (C55-P), yielding GlcNAc-pyrophosphoryl-undecaprenyl (GlcNAc-PP-C55). The sequence is that of Undecaprenyl-phosphate alpha-N-acetylglucosaminyl 1-phosphate transferase from Escherichia coli O157:H7.